A 1361-amino-acid polypeptide reads, in one-letter code: DNA-directed RNA polymerase subunit beta (1361 aa).

The protein belongs to the RNA polymerase beta chain family. As to quaternary structure, the RNAP catalytic core consists of 2 alpha, 1 beta, 1 beta' and 1 omega subunit. When a sigma factor is associated with the core the holoenzyme is formed, which can initiate transcription.

It catalyses the reaction RNA(n) + a ribonucleoside 5'-triphosphate = RNA(n+1) + diphosphate. Functionally, DNA-dependent RNA polymerase catalyzes the transcription of DNA into RNA using the four ribonucleoside triphosphates as substrates. This Cellvibrio japonicus (strain Ueda107) (Pseudomonas fluorescens subsp. cellulosa) protein is DNA-directed RNA polymerase subunit beta.